The following is a 1143-amino-acid chain: FH2 domain-containing protein 1 (1143 aa).

Residues 16–89 form a disordered region; sequence GNIATAPGFM…PPTTHMNGYS (74 aa). Composition is skewed to pro residues over residues 29-46 and 56-80; these read TPPPAPPPPPPPPPPSPP and SSPPPPPPPPLPGEPPIPPPPPGLP. The FH2 domain occupies 87 to 482; it reads GYSHLGKKKR…QLQRLKEQEQ (396 aa). S500 bears the Phosphoserine mark. Positions 517–638 are disordered; that stretch reads PFLHPRPISP…NHASAFPRAR (122 aa). Positions 521-534 are enriched in low complexity; the sequence is PRPISPSSPSYRPP. S650, S660, and S664 each carry phosphoserine. The tract at residues 706 to 1143 is disordered; the sequence is LESVGHRGPQ…LGRILNPLRK (438 aa). Residues 806 to 818 are compositionally biased toward low complexity; that stretch reads GSMSSGVGEMGDS. A compositionally biased stretch (basic and acidic residues) spans 848 to 861; that stretch reads LPRDKPTKRKDVVA. Residues 925 to 947 are compositionally biased toward polar residues; it reads RGPSQNPPSSTDTVWSRQNSVRR. Residues 958–968 show a composition bias toward low complexity; sequence PRGSSGSSSTR. Positions 960 to 1086 are MTBD; microtubule-binding domain; it reads GSSGSSSTRP…DAAPKDSSTL (127 aa). The span at 995–1018 shows a compositional bias: basic and acidic residues; it reads QKPEENKTCRAHSEGPESPKEEPK. Polar residues predominate over residues 1036 to 1046; sequence ARNTVASSSRS. 2 stretches are compositionally biased toward basic and acidic residues: residues 1071 to 1080 and 1117 to 1130; these read VKGDPEDAAP and GAGERASLRRKDSS.

Interacts with CEP170.

The protein resides in the cell projection. Its subcellular location is the cilium. The protein localises to the golgi apparatus. Functionally, microtubule-associated formin which regulates both actin and microtubule dynamics. Induces microtubule acetylation and stabilization and actin stress fiber formation. Regulates Golgi ribbon formation. Required for normal cilia assembly. Early in cilia assembly, may assist in the maturation and positioning of the centrosome/basal body, and once cilia assembly has initiated, may also promote cilia elongation by inhibiting disassembly. The chain is FH2 domain-containing protein 1 (FHDC1) from Homo sapiens (Human).